Reading from the N-terminus, the 145-residue chain is Basic phospholipase A2 S11-61 (145 aa).

The signal sequence occupies residues 1–19; the sequence is MYPVHLLVLLAVCVSLLGA. A propeptide spanning residues 20–27 is cleaved from the precursor; that stretch reads SNIPPQPL. 7 cysteine pairs are disulfide-bonded: C38/C98, C54/C144, C56/C72, C71/C125, C78/C118, C87/C111, and C105/C116. Y55, G57, and G59 together coordinate Ca(2+). H75 is an active-site residue. D76 lines the Ca(2+) pocket. D119 is an active-site residue.

It belongs to the phospholipase A2 family. Group I subfamily. D49 sub-subfamily. Requires Ca(2+) as cofactor. As to expression, expressed by the venom gland.

It localises to the secreted. It carries out the reaction a 1,2-diacyl-sn-glycero-3-phosphocholine + H2O = a 1-acyl-sn-glycero-3-phosphocholine + a fatty acid + H(+). Snake venom phospholipase A2 (PLA2) that inhibits collagen-induced platelet aggregation. PLA2 catalyzes the calcium-dependent hydrolysis of the 2-acyl groups in 3-sn-phosphoglycerides. The sequence is that of Basic phospholipase A2 S11-61 from Austrelaps superbus (Lowland copperhead snake).